Consider the following 839-residue polypeptide: Homeobox-leucine zipper protein HOX10 (839 aa).

2 disordered regions span residues 1–24 and 132–157; these read MAAA…SGMD and QNTP…RDAS. A DNA-binding region (homeobox) is located at residues 24–87; the sequence is DSGKYVRYTP…NRRCRDKQRK (64 aa). Positions 91–134 form a coiled coil; it reads RLQAVNRKLTAMNKLLMEENERLQKQVSQLVHENAHMRQQLQNT. Positions 155 to 383 constitute an START domain; it reads DASNPSGLLS…IAQETSGEVV (229 aa).

Belongs to the HD-ZIP homeobox family. Class III subfamily. Expressed in stems, leaf sheaths and blades and panicles.

Its subcellular location is the nucleus. Its function is as follows. Probable transcription factor. In Oryza sativa subsp. indica (Rice), this protein is Homeobox-leucine zipper protein HOX10 (HOX10).